Here is a 183-residue protein sequence, read N- to C-terminus: Large ribosomal subunit protein uL18 (183 aa).

This sequence belongs to the universal ribosomal protein uL18 family. Part of the 50S ribosomal subunit. Contacts the 5S and 23S rRNAs.

This is one of the proteins that bind and probably mediate the attachment of the 5S RNA into the large ribosomal subunit, where it forms part of the central protuberance. The polypeptide is Large ribosomal subunit protein uL18 (Halobacterium salinarum (strain ATCC 29341 / DSM 671 / R1)).